The primary structure comprises 868 residues: Metabotropic glutamate receptor 6 (868 aa).

The first 20 residues, 1 to 20, serve as a signal peptide directing secretion; the sequence is MARLLLALLAWLAQMSPVRA. Over 21–576 the chain is Extracellular; that stretch reads AGSVRLAGGL…VVRLTWSSPW (556 aa). Cysteine 48 and cysteine 90 are joined by a disulfide. Residues serine 145, 166–168, and tyrosine 216 contribute to the L-glutamate site; that span reads AST. 7 cysteine pairs are disulfide-bonded: cysteine 235-cysteine 527, cysteine 358-cysteine 374, cysteine 414-cysteine 421, cysteine 509-cysteine 528, cysteine 513-cysteine 531, cysteine 534-cysteine 546, and cysteine 549-cysteine 562. Asparagine 287 carries an N-linked (GlcNAc...) asparagine glycan. Aspartate 298 is an L-glutamate binding site. L-glutamate is bound at residue lysine 391. N-linked (GlcNAc...) asparagine glycosylation is found at asparagine 442 and asparagine 470. Asparagine 558 is a glycosylation site (N-linked (GlcNAc...) asparagine). A helical transmembrane segment spans residues 577–599; the sequence is AAPPLLLAVLGIMATTTVVGTFV. Over 600–613 the chain is Cytoplasmic; it reads RHNNTPIVRASGRE. The chain crosses the membrane as a helical span at residues 614–634; sequence LSYVLLTGIFLIYAVTFLMVA. Topologically, residues 635 to 645 are extracellular; sequence EPGAAVCATRR. A helical membrane pass occupies residues 646–664; that stretch reads LFLGLGTTLSYSALLTKTN. The Cytoplasmic segment spans residues 665–688; the sequence is RIYRIFEQGKRSVTPPPFISPTSQ. The chain crosses the membrane as a helical span at residues 689–709; that stretch reads LVITFSLTSLQVVGVIAWLGA. Residues 710-739 are Extracellular-facing; the sequence is QPPHSVIDYEEQRTVDPEQARGVLKCDMSD. The helical transmembrane segment at 740-761 threads the bilayer; that stretch reads LSLIGCLGYSLLLMVTCTVYAI. At 762–774 the chain is on the cytoplasmic side; sequence KARGVPETFNEAK. A helical membrane pass occupies residues 775 to 797; that stretch reads PIGFTMYTTCIVWLAFVPIFFGT. Residues 798–810 lie on the Extracellular side of the membrane; the sequence is AQSAEKIYIQTTT. A helical membrane pass occupies residues 811-836; it reads LTVSLSLSASVSLGMLYVPKTYVILF. Residues 837–868 are Cytoplasmic-facing; it reads HPEQNVQKRKRSLKTTSTVAAPPKGADTEDPK. A disordered region spans residues 845 to 868; the sequence is RKRSLKTTSTVAAPPKGADTEDPK.

Belongs to the G-protein coupled receptor 3 family. In terms of assembly, homodimer. Interacts with GPR179. Interacts with photoreceptor synaptic protein LRIT1 (via its N-terminal extracellular domain).

It is found in the cell membrane. The protein resides in the endoplasmic reticulum membrane. The protein localises to the golgi apparatus membrane. It localises to the cell projection. Its subcellular location is the dendrite. G-protein coupled receptor for glutamate. Ligand binding causes a conformation change that triggers signaling via guanine nucleotide-binding proteins (G proteins) and modulates the activity of down-stream effectors, such as adenylate cyclase. Signaling inhibits adenylate cyclase activity. Signaling stimulates TRPM1 channel activity and Ca(2+) uptake. Required for normal vision. This Oryctolagus cuniculus (Rabbit) protein is Metabotropic glutamate receptor 6 (GRM6).